Consider the following 67-residue polypeptide: Conotoxin Cal12.1p2 (67 aa).

The propeptide occupies 1 to 21 (DLITNSYTRGKPRHVTSWRNL).

In terms of processing, contains 4 disulfide bonds. Expressed by the venom duct.

It localises to the secreted. The chain is Conotoxin Cal12.1p2 from Californiconus californicus (California cone).